The following is a 165-amino-acid chain: Ecotin-like protein 4 (165 aa).

The protein belongs to the protease inhibitor I11 (ecotin) family.

The sequence is that of Ecotin-like protein 4 from Trypanosoma brucei brucei (strain 927/4 GUTat10.1).